Here is an 843-residue protein sequence, read N- to C-terminus: Protein P (843 aa).

A terminal protein domain (TP) region spans residues 1-177 (MPLSYQHFRK…FCGSPYSWEQ (177 aa)). Residues 178 to 346 (ELQHGRLVFQ…YCLSHLINLH (169 aa)) form a spacer region. Disordered regions lie at residues 218–243 (LKQSRLGLQPQQGSLARGKSGRSGSI) and 291–315 (TAQRHSPSGHAVEFHSIPPSSAGSQ). The segment at 347-690 (EDWGPCIEHG…YLNLYPVARQ (344 aa)) is polymerase/reverse transcriptase domain (RT). The 244-residue stretch at 357-600 (EHNIRIPRTP…YSLNFMGYVI (244 aa)) folds into the Reverse transcriptase domain. 3 residues coordinate Mg(2+): Asp-429, Asp-551, and Asp-552.

This sequence belongs to the hepadnaviridae P protein family.

The catalysed reaction is DNA(n) + a 2'-deoxyribonucleoside 5'-triphosphate = DNA(n+1) + diphosphate. It catalyses the reaction Endonucleolytic cleavage to 5'-phosphomonoester.. Its activity is regulated as follows. Activated by host HSP70 and HSP40 in vitro to be able to bind the epsilon loop of the pgRNA. Because deletion of the RNase H region renders the protein partly chaperone-independent, the chaperones may be needed indirectly to relieve occlusion of the RNA-binding site by this domain. Inhibited by several reverse-transcriptase inhibitors: Lamivudine, Adefovir and Entecavir. Its function is as follows. Multifunctional enzyme that converts the viral RNA genome into dsDNA in viral cytoplasmic capsids. This enzyme displays a DNA polymerase activity that can copy either DNA or RNA templates, and a ribonuclease H (RNase H) activity that cleaves the RNA strand of RNA-DNA heteroduplexes in a partially processive 3'- to 5'-endonucleasic mode. Neo-synthesized pregenomic RNA (pgRNA) are encapsidated together with the P protein, and reverse-transcribed inside the nucleocapsid. Initiation of reverse-transcription occurs first by binding the epsilon loop on the pgRNA genome, and is initiated by protein priming, thereby the 5'-end of (-)DNA is covalently linked to P protein. Partial (+)DNA is synthesized from the (-)DNA template and generates the relaxed circular DNA (RC-DNA) genome. After budding and infection, the RC-DNA migrates in the nucleus, and is converted into a plasmid-like covalently closed circular DNA (cccDNA). The activity of P protein does not seem to be necessary for cccDNA generation, and is presumably released from (+)DNA by host nuclear DNA repair machinery. This is Protein P from Hepatitis B virus genotype C subtype ayw (isolate Australia/AustRC/1992) (HBV-C).